A 215-amino-acid polypeptide reads, in one-letter code: Leucyl/phenylalanyl-tRNA--protein transferase (215 aa).

It belongs to the L/F-transferase family.

The protein resides in the cytoplasm. The catalysed reaction is N-terminal L-lysyl-[protein] + L-leucyl-tRNA(Leu) = N-terminal L-leucyl-L-lysyl-[protein] + tRNA(Leu) + H(+). It carries out the reaction N-terminal L-arginyl-[protein] + L-leucyl-tRNA(Leu) = N-terminal L-leucyl-L-arginyl-[protein] + tRNA(Leu) + H(+). It catalyses the reaction L-phenylalanyl-tRNA(Phe) + an N-terminal L-alpha-aminoacyl-[protein] = an N-terminal L-phenylalanyl-L-alpha-aminoacyl-[protein] + tRNA(Phe). In terms of biological role, functions in the N-end rule pathway of protein degradation where it conjugates Leu, Phe and, less efficiently, Met from aminoacyl-tRNAs to the N-termini of proteins containing an N-terminal arginine or lysine. This Campylobacter jejuni subsp. jejuni serotype O:2 (strain ATCC 700819 / NCTC 11168) protein is Leucyl/phenylalanyl-tRNA--protein transferase.